The chain runs to 401 residues: 4-hydroxy-3-methylbut-2-enyl diphosphate reductase (401 aa).

Cys-66 is a [4Fe-4S] cluster binding site. Position 96 (His-96) interacts with (2E)-4-hydroxy-3-methylbut-2-enyl diphosphate. Residue His-96 coordinates dimethylallyl diphosphate. His-96 provides a ligand contact to isopentenyl diphosphate. Residue Cys-157 participates in [4Fe-4S] cluster binding. His-185 provides a ligand contact to (2E)-4-hydroxy-3-methylbut-2-enyl diphosphate. His-185 is a binding site for dimethylallyl diphosphate. His-185 is a binding site for isopentenyl diphosphate. Glu-187 (proton donor) is an active-site residue. Residue Thr-250 participates in (2E)-4-hydroxy-3-methylbut-2-enyl diphosphate binding. [4Fe-4S] cluster is bound at residue Cys-288. The (2E)-4-hydroxy-3-methylbut-2-enyl diphosphate site is built by Ser-317, Ser-318, Asn-319, and Ser-379. Dimethylallyl diphosphate-binding residues include Ser-317, Ser-318, Asn-319, and Ser-379. The isopentenyl diphosphate site is built by Ser-317, Ser-318, Asn-319, and Ser-379.

The protein belongs to the IspH family. [4Fe-4S] cluster serves as cofactor.

The catalysed reaction is isopentenyl diphosphate + 2 oxidized [2Fe-2S]-[ferredoxin] + H2O = (2E)-4-hydroxy-3-methylbut-2-enyl diphosphate + 2 reduced [2Fe-2S]-[ferredoxin] + 2 H(+). It catalyses the reaction dimethylallyl diphosphate + 2 oxidized [2Fe-2S]-[ferredoxin] + H2O = (2E)-4-hydroxy-3-methylbut-2-enyl diphosphate + 2 reduced [2Fe-2S]-[ferredoxin] + 2 H(+). Its pathway is isoprenoid biosynthesis; dimethylallyl diphosphate biosynthesis; dimethylallyl diphosphate from (2E)-4-hydroxy-3-methylbutenyl diphosphate: step 1/1. It participates in isoprenoid biosynthesis; isopentenyl diphosphate biosynthesis via DXP pathway; isopentenyl diphosphate from 1-deoxy-D-xylulose 5-phosphate: step 6/6. Functionally, catalyzes the conversion of 1-hydroxy-2-methyl-2-(E)-butenyl 4-diphosphate (HMBPP) into a mixture of isopentenyl diphosphate (IPP) and dimethylallyl diphosphate (DMAPP). Acts in the terminal step of the DOXP/MEP pathway for isoprenoid precursor biosynthesis. The protein is 4-hydroxy-3-methylbut-2-enyl diphosphate reductase of Trichodesmium erythraeum (strain IMS101).